Consider the following 546-residue polypeptide: MTASKKLTGCQAWKALAAHRRNWKLHLRDLFAGDPGRGERMTAEAVGLFLDYSKNFVTDETLKLLLRLAEETGLRGRIEALFRGEKINLTENRAALHVALRSPKGTSIVVDGENVVPQVHDVLDRMAAFAVQVRSGSWKGHSGKGIRNVVNIGIGGSDLGPVMAYEALKYYSDRSLTFRFVSNIDGTDFAEAVQDLDAAETLFIVASKTFTTLETMTNASTARAWLLQGFKGDEKAVAKHFVAVSTNTAEVAKFGIDTANMFGFWNWVGGRYSMDSAIGLSTMLAIGPDNFRDMLAGFHAMDVHFRTAPFGVNLPVLMGLLTIWYNNFFAAETVAVLPYEQYLKRFPAYLQQLTMESNGKRVTLDGMEVDYQTSPIYWGEPGTNGQHSFYQLIHQGTKLIPCDFIAFVEPLHPLGRHHDLLMANVFAQAEALAFGRTLEEVTSEGIPAWLAPHKVFEGNRPSNTILAQRLTPETLGKLVALYEHSVFTQSAIWNINPFDQWGVELGKVLAQRVITELESREEPELGHDSSTNAMIRRYRKFRERME.

Glu356 serves as the catalytic Proton donor. Residues His387 and Lys507 contribute to the active site.

This sequence belongs to the GPI family.

It is found in the cytoplasm. It catalyses the reaction alpha-D-glucose 6-phosphate = beta-D-fructose 6-phosphate. It functions in the pathway carbohydrate biosynthesis; gluconeogenesis. Its pathway is carbohydrate degradation; glycolysis; D-glyceraldehyde 3-phosphate and glycerone phosphate from D-glucose: step 2/4. Functionally, catalyzes the reversible isomerization of glucose-6-phosphate to fructose-6-phosphate. The protein is Glucose-6-phosphate isomerase of Syntrophus aciditrophicus (strain SB).